Here is a 2594-residue protein sequence, read N- to C-terminus: Immunoglobulin superfamily member 10 (2594 aa).

Residues 1–25 form the signal peptide; the sequence is MQKRGREVSCLLISLTAICLVVTPG. An LRRNT domain is found at 29 to 56; the sequence is CPRRCACYVPTEVHCTFRYLTSIPDGIP. 6 LRR repeats span residues 58-79, 82-103, 106-127, 130-151, 154-175, and 186-207; these read NVERVNLGYNSLTRLTENDFSG, RLELLMLHSNGIHRVSDKTFSG, SLQVLKMSYNKVQIIEKDTLYG, SLTRLHLDHNNIEFINPEAFYG, LLRLVHLEGNRLTKLHPDTFVS, and FIKYLYLSDNFLTSLPKEMVSS. Residues 219 to 281 form the LRRCT domain; sequence NPWTCDCHLK…VPSGSFLCTK (63 aa). Asn-439 carries an N-linked (GlcNAc...) asparagine glycan. Ig-like C2-type domains follow at residues 461 to 567 and 571 to 661; these read PKAE…YRIT and PYVE…FQVS. Disulfide bonds link Cys-497-Cys-551 and Cys-595-Cys-645. Asn-627 carries an N-linked (GlcNAc...) asparagine glycan. Positions 670–685 are enriched in basic and acidic residues; that stretch reads IEHDRDIDGSGLEEPK. Disordered stretches follow at residues 670–725 and 963–1008; these read IEHD…RDLT and VSSN…GRER. Basic residues predominate over residues 715-725; the sequence is IHKKNKHRDLT. The segment covering 972–984 has biased composition (basic and acidic residues); the sequence is TTKDPGFSKRPSD. Residues 985-1003 show a composition bias toward polar residues; the sequence is SHTTAPSLFQTPRNNSTGN. Asn-1044 carries N-linked (GlcNAc...) asparagine glycosylation. Disordered regions lie at residues 1228-1251, 1333-1364, and 1428-1457; these read TATKPPEKAPLLPTDHGSSSPSTT, VRSKKAKDQTKGSLKNRKGPTITPRQISGYST, and SQESTAMKRASATPPLLSSGAPRMPTPSPP. Residues 1333–1342 show a composition bias toward basic and acidic residues; sequence VRSKKAKDQT. Residues 1355–1364 are compositionally biased toward polar residues; that stretch reads TPRQISGYST. 10 consecutive Ig-like C2-type domains span residues 1619–1710, 1715–1807, 1812–1901, 1912–2005, 2008–2106, 2112–2200, 2205–2302, 2308–2398, 2403–2493, and 2499–2592; these read PRII…VTLS, PARI…VKIQ, PPVI…RRVV, PRIE…VRLR, PAKI…VHLT, PRIR…YKLD, PPLI…LKVL, PTFR…ILLE, PVIL…VPVT, and PRII…TYIQ. Cystine bridges form between Cys-1641-Cys-1694, Cys-1738-Cys-1791, and Cys-1835-Cys-1888. Residues 1658-1681 form an LRR 11 repeat; it reads SGREISRGIQKTRFHVLPNGTLSI. N-linked (GlcNAc...) asparagine glycosylation is found at Asn-1676, Asn-1780, Asn-1870, and Asn-1933. 7 disulfides stabilise this stretch: Cys-1934–Cys-1987, Cys-2031–Cys-2090, Cys-2134–Cys-2184, Cys-2232–Cys-2284, Cys-2330–Cys-2382, Cys-2425–Cys-2477, and Cys-2521–Cys-2576. The N-linked (GlcNAc...) asparagine glycan is linked to Asn-2072. Asn-2364 is a glycosylation site (N-linked (GlcNAc...) asparagine). Position 2574 is a phosphotyrosine (Tyr-2574).

In the embryo, expressed in the nasal mesenchyme.

The protein resides in the secreted. In terms of biological role, involved in the control of early migration of neurons expressing gonadotropin-releasing hormone (GNRH neurons). May be involved in the maintenance of osteochondroprogenitor cells pool. The polypeptide is Immunoglobulin superfamily member 10 (Igsf10) (Mus musculus (Mouse)).